A 335-amino-acid chain; its full sequence is Beta-hexosaminidase (335 aa).

Residues D60, R68, R133, and 163-164 each bind substrate; that span reads KH. The active-site Proton donor/acceptor is H176. The active-site Nucleophile is D247.

This sequence belongs to the glycosyl hydrolase 3 family. NagZ subfamily.

Its subcellular location is the cytoplasm. The catalysed reaction is Hydrolysis of terminal non-reducing N-acetyl-D-hexosamine residues in N-acetyl-beta-D-hexosaminides.. Its pathway is cell wall biogenesis; peptidoglycan recycling. In terms of biological role, plays a role in peptidoglycan recycling by cleaving the terminal beta-1,4-linked N-acetylglucosamine (GlcNAc) from peptide-linked peptidoglycan fragments, giving rise to free GlcNAc, anhydro-N-acetylmuramic acid and anhydro-N-acetylmuramic acid-linked peptides. This Xylella fastidiosa (strain M23) protein is Beta-hexosaminidase.